A 389-amino-acid chain; its full sequence is S-adenosylmethionine synthase (389 aa).

Residue His-15 coordinates ATP. Asp-17 is a Mg(2+) binding site. Glu-43 serves as a coordination point for K(+). 2 residues coordinate L-methionine: Glu-56 and Gln-99. Residues 99 to 109 (QSPDIAQGVNE) form a flexible loop region. ATP-binding positions include 166-168 (DAK), 234-235 (RF), Asp-243, 249-250 (RK), Ala-266, and Lys-270. Asp-243 is an L-methionine binding site. Lys-274 is a binding site for L-methionine.

Belongs to the AdoMet synthase family. In terms of assembly, homotetramer; dimer of dimers. Requires Mg(2+) as cofactor. It depends on K(+) as a cofactor.

It localises to the cytoplasm. The catalysed reaction is L-methionine + ATP + H2O = S-adenosyl-L-methionine + phosphate + diphosphate. It participates in amino-acid biosynthesis; S-adenosyl-L-methionine biosynthesis; S-adenosyl-L-methionine from L-methionine: step 1/1. Its function is as follows. Catalyzes the formation of S-adenosylmethionine (AdoMet) from methionine and ATP. The overall synthetic reaction is composed of two sequential steps, AdoMet formation and the subsequent tripolyphosphate hydrolysis which occurs prior to release of AdoMet from the enzyme. This chain is S-adenosylmethionine synthase, found in Neisseria meningitidis serogroup B (strain ATCC BAA-335 / MC58).